The primary structure comprises 124 residues: Fluoride-specific ion channel FluC (124 aa).

4 consecutive transmembrane segments (helical) span residues 1-21 (MIGVTLAVAVGGALGCLLRFA), 34-54 (FYAATLAVNIAGCLLIGYLYG), 62-82 (VPLALRAGLIAGFLGGLTTFS), and 101-121 (FSYLAFSVLGGLLATWAGLIL). Na(+) contacts are provided by Gly76 and Thr79.

It belongs to the fluoride channel Fluc/FEX (TC 1.A.43) family.

It localises to the cell inner membrane. It catalyses the reaction fluoride(in) = fluoride(out). Na(+) is not transported, but it plays an essential structural role and its presence is essential for fluoride channel function. Its function is as follows. Fluoride-specific ion channel. Important for reducing fluoride concentration in the cell, thus reducing its toxicity. The polypeptide is Fluoride-specific ion channel FluC (Azotobacter vinelandii (strain DJ / ATCC BAA-1303)).